Reading from the N-terminus, the 142-residue chain is 3-hydroxyacyl-[acyl-carrier-protein] dehydratase FabZ (142 aa).

His46 is an active-site residue.

This sequence belongs to the thioester dehydratase family. FabZ subfamily.

It is found in the cytoplasm. The enzyme catalyses a (3R)-hydroxyacyl-[ACP] = a (2E)-enoyl-[ACP] + H2O. Functionally, involved in unsaturated fatty acids biosynthesis. Catalyzes the dehydration of short chain beta-hydroxyacyl-ACPs and long chain saturated and unsaturated beta-hydroxyacyl-ACPs. This is 3-hydroxyacyl-[acyl-carrier-protein] dehydratase FabZ from Thermus thermophilus (strain ATCC BAA-163 / DSM 7039 / HB27).